We begin with the raw amino-acid sequence, 287 residues long: Putative DNA-3-methyladenine glycosylase YfjP (287 aa).

Aspartate 242 functions as the Proton acceptor in the catalytic mechanism.

This sequence belongs to the alkylbase DNA glycosidase AlkA family.

It carries out the reaction Hydrolysis of alkylated DNA, releasing 3-methyladenine, 3-methylguanine, 7-methylguanine and 7-methyladenine.. Hydrolysis of the deoxyribose N-glycosidic bond to excise 3-methyladenine, 3-methylguanine, 7-methylguanine, O2-methylthymine, and O2-methylcytosine from the damaged DNA polymer formed by alkylation lesions. The polypeptide is Putative DNA-3-methyladenine glycosylase YfjP (yfjP) (Bacillus subtilis (strain 168)).